Consider the following 680-residue polypeptide: Glutamine-dependent NAD(+) synthetase (680 aa).

A CN hydrolase domain is found at 12–276 (VRVAACTHHA…EHRSVADVDT (265 aa)). Catalysis depends on glutamate 52, which acts as the Proton acceptor; for glutaminase activity. The For glutaminase activity role is filled by lysine 121. Residue tyrosine 127 participates in L-glutamine binding. Cysteine 176 serves as the catalytic Nucleophile; for glutaminase activity. Residues serine 203 and arginine 209 each coordinate L-glutamine. 366-373 (GVSGGLDS) is an ATP binding site. Asparagine 456 provides a ligand contact to deamido-NAD(+). ATP is bound at residue threonine 480. Deamido-NAD(+) contacts are provided by residues glutamate 485, 490–493 (WSTY), and lysine 636.

In the C-terminal section; belongs to the NAD synthetase family.

It catalyses the reaction deamido-NAD(+) + L-glutamine + ATP + H2O = L-glutamate + AMP + diphosphate + NAD(+) + H(+). Its pathway is cofactor biosynthesis; NAD(+) biosynthesis; NAD(+) from deamido-NAD(+) (L-Gln route): step 1/1. Catalyzes the ATP-dependent amidation of deamido-NAD to form NAD. Uses L-glutamine as a nitrogen source. This is Glutamine-dependent NAD(+) synthetase from Mycobacterium leprae (strain TN).